Consider the following 79-residue polypeptide: Translational regulator CsrA (79 aa).

Belongs to the CsrA/RsmA family. In terms of assembly, homodimer; the beta-strands of each monomer intercalate to form a hydrophobic core, while the alpha-helices form wings that extend away from the core.

It localises to the cytoplasm. Functionally, a translational regulator that binds mRNA to regulate translation initiation and/or mRNA stability. Usually binds in the 5'-UTR at or near the Shine-Dalgarno sequence preventing ribosome-binding, thus repressing translation. Its main target seems to be the major flagellin gene, while its function is anatagonized by FliW. The polypeptide is Translational regulator CsrA (Helicobacter hepaticus (strain ATCC 51449 / 3B1)).